The primary structure comprises 227 residues: Large ribosomal subunit protein uL3 (227 aa).

A disordered region spans residues 129 to 154 (GMQPVSHGQSDRTRSRGSSGAQGPQK).

The protein belongs to the universal ribosomal protein uL3 family. In terms of assembly, part of the 50S ribosomal subunit. Forms a cluster with proteins L14 and L19.

One of the primary rRNA binding proteins, it binds directly near the 3'-end of the 23S rRNA, where it nucleates assembly of the 50S subunit. In Endomicrobium trichonymphae, this protein is Large ribosomal subunit protein uL3.